The following is a 709-amino-acid chain: Polyribonucleotide nucleotidyltransferase (709 aa).

Mg(2+)-binding residues include Asp-487 and Asp-493. Residues 554–613 (PRIHTMKISVEKIKDVIGKGGAVIRQLTEETGTTIEIEDDGTIKIAATDGDQAKEAIRRI) form the KH domain. The S1 motif domain maps to 623 to 691 (GVIYTGKVAR…RQGRVRLSMK (69 aa)).

The protein belongs to the polyribonucleotide nucleotidyltransferase family. In terms of assembly, component of the RNA degradosome, which is a multiprotein complex involved in RNA processing and mRNA degradation. It depends on Mg(2+) as a cofactor.

It is found in the cytoplasm. It carries out the reaction RNA(n+1) + phosphate = RNA(n) + a ribonucleoside 5'-diphosphate. Involved in mRNA degradation. Catalyzes the phosphorolysis of single-stranded polyribonucleotides processively in the 3'- to 5'-direction. The protein is Polyribonucleotide nucleotidyltransferase of Vibrio cholerae serotype O1 (strain ATCC 39315 / El Tor Inaba N16961).